A 242-amino-acid polypeptide reads, in one-letter code: DNA repair protein RecO (242 aa).

The protein belongs to the RecO family. In terms of assembly, monomer.

Functionally, involved in DNA repair and RecF pathway recombination. This Shigella flexneri serotype 5b (strain 8401) protein is DNA repair protein RecO.